Reading from the N-terminus, the 347-residue chain is Probable dual-specificity RNA methyltransferase RlmN (347 aa).

E90 (proton acceptor) is an active-site residue. In terms of domain architecture, Radical SAM core spans 96–326; sequence YKHGNSICIS…VTVRREMGSD (231 aa). C103 and C331 are joined by a disulfide. The [4Fe-4S] cluster site is built by C110, C114, and C117. S-adenosyl-L-methionine is bound by residues 157–158, S189, 212–214, and N288; these read GE and SLH. Residue C331 is the S-methylcysteine intermediate of the active site.

Belongs to the radical SAM superfamily. RlmN family. Requires [4Fe-4S] cluster as cofactor.

Its subcellular location is the cytoplasm. It catalyses the reaction adenosine(2503) in 23S rRNA + 2 reduced [2Fe-2S]-[ferredoxin] + 2 S-adenosyl-L-methionine = 2-methyladenosine(2503) in 23S rRNA + 5'-deoxyadenosine + L-methionine + 2 oxidized [2Fe-2S]-[ferredoxin] + S-adenosyl-L-homocysteine. It carries out the reaction adenosine(37) in tRNA + 2 reduced [2Fe-2S]-[ferredoxin] + 2 S-adenosyl-L-methionine = 2-methyladenosine(37) in tRNA + 5'-deoxyadenosine + L-methionine + 2 oxidized [2Fe-2S]-[ferredoxin] + S-adenosyl-L-homocysteine. Specifically methylates position 2 of adenine 2503 in 23S rRNA and position 2 of adenine 37 in tRNAs. The polypeptide is Probable dual-specificity RNA methyltransferase RlmN (Clostridium botulinum (strain Eklund 17B / Type B)).